A 77-amino-acid polypeptide reads, in one-letter code: Secapin (77 aa).

Positions 1–32 (MKNYSKNATHLITVLLFSFVVILLIIPSKCEA) are cleaved as a signal peptide. Positions 33-52 (VSNDMQPLEARSADLVPEPR) are excised as a propeptide. A disulfide bond links Cys-61 and Cys-72.

This sequence belongs to the secapin family. As to expression, expressed by the venom gland.

Its subcellular location is the secreted. Its function is as follows. Serine protease inhibitor which exhibits antifibrinolytic, antielastolytic and antimicrobial activities. Displays antimicrobial activity against bacteria and fungi. Likely functions in the innate immune response to microbial infection and possibly in the venom, as an antifibrinolytic agent. Not toxic to mice but does induce slight sedation at higher doses (from 40 mg/kg). At a dose of 80 mg/kg, sedation occurs 15 minutes after injection and is accompanied by piloerection and hypothermia. The polypeptide is Secapin (Apis mellifera (Honeybee)).